The following is a 439-amino-acid chain: tRNA-2-methylthio-N(6)-dimethylallyladenosine synthase (439 aa).

In terms of domain architecture, MTTase N-terminal spans 2-119 (KKLYLKTHGC…LPDLLDSVIQ (118 aa)). [4Fe-4S] cluster contacts are provided by Cys11, Cys48, Cys82, Cys156, Cys160, and Cys163. Residues 142 to 374 (RAEGPSAFVS…QNRINVKAAE (233 aa)) form the Radical SAM core domain. The TRAM domain occupies 377 to 439 (QSMVGTQQRI…RPYSLWGEIC (63 aa)).

Belongs to the methylthiotransferase family. MiaB subfamily. In terms of assembly, monomer. It depends on [4Fe-4S] cluster as a cofactor.

Its subcellular location is the cytoplasm. It carries out the reaction N(6)-dimethylallyladenosine(37) in tRNA + (sulfur carrier)-SH + AH2 + 2 S-adenosyl-L-methionine = 2-methylsulfanyl-N(6)-dimethylallyladenosine(37) in tRNA + (sulfur carrier)-H + 5'-deoxyadenosine + L-methionine + A + S-adenosyl-L-homocysteine + 2 H(+). Catalyzes the methylthiolation of N6-(dimethylallyl)adenosine (i(6)A), leading to the formation of 2-methylthio-N6-(dimethylallyl)adenosine (ms(2)i(6)A) at position 37 in tRNAs that read codons beginning with uridine. This chain is tRNA-2-methylthio-N(6)-dimethylallyladenosine synthase, found in Coxiella burnetii (strain Dugway 5J108-111).